Consider the following 101-residue polypeptide: 2-amino-4-ketopentanoate thiolase alpha subunit (101 aa).

It belongs to the OrtA family. Heterodimer with OrtB.

It carries out the reaction D-alanine + acetyl-CoA = (2R)-2-amino-4-oxopentanoate + CoA. Completely inhibited by p-chloromercuribenzoate (p-ClHgBzO) and acetyl-CoA, and partially inhibited by N-ethylmaleimide. Functionally, involved in the ornithine fermentation pathway. Catalyzes the thiolytic cleavage of 2-amino-4-ketopentanoate (AKP) with coenzyme A (CoA) to form acetyl-CoA and alanine. It is strictly specific for AKP. The sequence is that of 2-amino-4-ketopentanoate thiolase alpha subunit from Acetoanaerobium sticklandii (strain ATCC 12662 / DSM 519 / JCM 1433 / CCUG 9281 / NCIMB 10654 / HF) (Clostridium sticklandii).